Here is a 375-residue protein sequence, read N- to C-terminus: Chaperone protein DnaJ (375 aa).

The J domain maps to 5–70 (DYYEILGISK…EKRAAYDQYG (66 aa)). The CR-type zinc finger occupies 130-208 (GIIKEICIPT…CHGNGRVERS (79 aa)). Residues Cys-143, Cys-146, Cys-160, Cys-163, Cys-182, Cys-185, Cys-196, and Cys-199 each coordinate Zn(2+). CXXCXGXG motif repeat units lie at residues 143–150 (CEKCRGTG), 160–167 (CMTCHGQG), 182–189 (CPTCHGHG), and 196–203 (CNKCHGNG).

The protein belongs to the DnaJ family. As to quaternary structure, homodimer. It depends on Zn(2+) as a cofactor.

The protein resides in the cytoplasm. In terms of biological role, participates actively in the response to hyperosmotic and heat shock by preventing the aggregation of stress-denatured proteins and by disaggregating proteins, also in an autonomous, DnaK-independent fashion. Unfolded proteins bind initially to DnaJ; upon interaction with the DnaJ-bound protein, DnaK hydrolyzes its bound ATP, resulting in the formation of a stable complex. GrpE releases ADP from DnaK; ATP binding to DnaK triggers the release of the substrate protein, thus completing the reaction cycle. Several rounds of ATP-dependent interactions between DnaJ, DnaK and GrpE are required for fully efficient folding. Also involved, together with DnaK and GrpE, in the DNA replication of plasmids through activation of initiation proteins. The sequence is that of Chaperone protein DnaJ from Blochmanniella pennsylvanica (strain BPEN).